Consider the following 361-residue polypeptide: Peptide chain release factor 1 (361 aa).

Position 237 is an N5-methylglutamine (glutamine 237). Over residues 287–297 (KQQKEQSDTRK) the composition is skewed to basic and acidic residues. Positions 287–307 (KQQKEQSDTRKNLVGSGDRSE) are disordered.

The protein belongs to the prokaryotic/mitochondrial release factor family. Methylated by PrmC. Methylation increases the termination efficiency of RF1.

It is found in the cytoplasm. Peptide chain release factor 1 directs the termination of translation in response to the peptide chain termination codons UAG and UAA. This Francisella philomiragia subsp. philomiragia (strain ATCC 25017 / CCUG 19701 / FSC 153 / O#319-036) protein is Peptide chain release factor 1.